Consider the following 672-residue polypeptide: Negative growth regulatory protein NGR1 (672 aa).

Methionine 1 is subject to N-acetylmethionine. 2 stretches are compositionally biased toward polar residues: residues 1 to 13 (MMSNVANASQRQE) and 23 to 32 (SSTVETSTEP). Disordered regions lie at residues 1-40 (MMSNVANASQRQENPYIIPLPPSSTVETSTEPPRTLWMGD) and 77-102 (SSTSSSNNNTSEENAENQQSASNSTD). Methionine 2 is subject to N-acetylserine. RRM domains are found at residues 36–159 (LWMG…YSPT), 192–271 (FSLF…YATP), and 360–432 (TTVF…WGRP). Over residues 77–96 (SSTSSSNNNTSEENAENQQS) the composition is skewed to low complexity. The residue at position 524 (serine 524) is a Phosphoserine. The disordered stretch occupies residues 640-672 (LNIAPNSNNSKSSIMNKHPNRNNVPPIHPSLLH). A compositionally biased stretch (low complexity) spans 645 to 656 (NSNNSKSSIMNK).

In terms of biological role, may be an RNA-binding protein involved in control of an RNA processing pathway that influences the regulation of cell growth in early log phase. Can bind to RNA and single-stranded DNA but not double-stranded DNA. The chain is Negative growth regulatory protein NGR1 (NGR1) from Saccharomyces cerevisiae (strain ATCC 204508 / S288c) (Baker's yeast).